We begin with the raw amino-acid sequence, 267 residues long: Pyridoxine/pyridoxamine 5'-phosphate oxidase (267 aa).

Residues Arg20 to Tyr23 and Lys80 each bind substrate. FMN contacts are provided by residues Arg75 to Lys80, Tyr90 to Thr91, Arg96, Lys97, and Gln119. The substrate site is built by Tyr137, Arg141, and Ser145. FMN contacts are provided by residues Gln154–Ser155 and Trp200. Arg206 to His208 contributes to the substrate binding site. Arg210 is a binding site for FMN.

It belongs to the pyridoxamine 5'-phosphate oxidase family. As to quaternary structure, homodimer. Requires FMN as cofactor.

The enzyme catalyses pyridoxamine 5'-phosphate + O2 + H2O = pyridoxal 5'-phosphate + H2O2 + NH4(+). The catalysed reaction is pyridoxine 5'-phosphate + O2 = pyridoxal 5'-phosphate + H2O2. It functions in the pathway cofactor metabolism; pyridoxal 5'-phosphate salvage; pyridoxal 5'-phosphate from pyridoxamine 5'-phosphate: step 1/1. It participates in cofactor metabolism; pyridoxal 5'-phosphate salvage; pyridoxal 5'-phosphate from pyridoxine 5'-phosphate: step 1/1. Catalyzes the oxidation of either pyridoxine 5'-phosphate (PNP) or pyridoxamine 5'-phosphate (PMP) into pyridoxal 5'-phosphate (PLP). This chain is Pyridoxine/pyridoxamine 5'-phosphate oxidase, found in Frankia casuarinae (strain DSM 45818 / CECT 9043 / HFP020203 / CcI3).